The primary structure comprises 519 residues: ATP synthase subunit alpha, mitochondrial (519 aa).

188-195 contacts ATP; that stretch reads GDRQTGKS.

The protein belongs to the ATPase alpha/beta chains family. As to quaternary structure, F-type ATPases have 2 components, CF(1) - the catalytic core - and CF(0) - the membrane proton channel. CF(1) has five subunits: alpha(3), beta(3), gamma(1), delta(1), epsilon(1). CF(0) has three main subunits: a, b and c.

It localises to the mitochondrion. Its subcellular location is the mitochondrion inner membrane. In terms of biological role, mitochondrial membrane ATP synthase (F(1)F(0) ATP synthase or Complex V) produces ATP from ADP in the presence of a proton gradient across the membrane which is generated by electron transport complexes of the respiratory chain. F-type ATPases consist of two structural domains, F(1) - containing the extramembraneous catalytic core, and F(0) - containing the membrane proton channel, linked together by a central stalk and a peripheral stalk. During catalysis, ATP synthesis in the catalytic domain of F(1) is coupled via a rotary mechanism of the central stalk subunits to proton translocation. Subunits alpha and beta form the catalytic core in F(1). Rotation of the central stalk against the surrounding alpha(3)beta(3) subunits leads to hydrolysis of ATP in three separate catalytic sites on the beta subunits. Subunit alpha does not bear the catalytic high-affinity ATP-binding sites. This is ATP synthase subunit alpha, mitochondrial (atp1) from Dictyostelium citrinum (Slime mold).